Here is a 307-residue protein sequence, read N- to C-terminus: MTKPRHYLQFKDFTRDDYRHVFDRTRWIKDKFKRYEPYHPLFDRTLVMIFEKASTRTRLSFEAGMQQLGGSAIYLNTRDSQLGRGEPVEDAAQVISRMSDVVMIRTFEQDIIERFAAHSRVPVINGLTNEYHPCQILADIYTFIEHRGSIQGRTVAWVGDSNNMCNTWLQAAELLDFNVHVSTPPGYEVEPERAGLYGTGHFEQFADPMEACKGADLVTTDVWTSMGFEAENDERMKDFADWCVDAEMMAAARADAVFMHCLPAHRGEEVTADVIDGAQSVVWDEAENRLHVQKALMEYLVLGKVED.

Residues 54–57 (STRT), Gln81, Arg105, and 132–135 (HPCQ) each bind carbamoyl phosphate. L-ornithine-binding positions include Asn163, Asp221, and 225 to 226 (SM). Carbamoyl phosphate is bound by residues 261–262 (CL) and Arg289.

Belongs to the aspartate/ornithine carbamoyltransferase superfamily. OTCase family.

Its subcellular location is the cytoplasm. The catalysed reaction is carbamoyl phosphate + L-ornithine = L-citrulline + phosphate + H(+). The protein operates within amino-acid biosynthesis; L-arginine biosynthesis; L-arginine from L-ornithine and carbamoyl phosphate: step 1/3. Its function is as follows. Reversibly catalyzes the transfer of the carbamoyl group from carbamoyl phosphate (CP) to the N(epsilon) atom of ornithine (ORN) to produce L-citrulline. The polypeptide is Ornithine carbamoyltransferase (Aromatoleum aromaticum (strain DSM 19018 / LMG 30748 / EbN1) (Azoarcus sp. (strain EbN1))).